Here is a 262-residue protein sequence, read N- to C-terminus: 4-hydroxy-2-oxo-heptane-1,7-dioate aldolase (262 aa).

Residue His45 is the Proton acceptor of the active site. Gln147 is a substrate binding site. Glu149 is a binding site for a divalent metal cation. Substrate-binding residues include Ala174 and Asp175. Asp175 contributes to the a divalent metal cation binding site.

Belongs to the HpcH/HpaI aldolase family. As to quaternary structure, homohexamer; trimer of dimers. The cofactor is a divalent metal cation.

The catalysed reaction is 4-hydroxy-2-oxoheptanedioate = succinate semialdehyde + pyruvate. It catalyses the reaction D-glyceraldehyde + 3-hydroxypyruvate = (3R,4S,5R)-3,4,5,6-tetrahydroxy-2-oxohexanoate. The enzyme catalyses D-glyceraldehyde + 3-hydroxypyruvate = 2-dehydro-D-gluconate. It carries out the reaction D-glyceraldehyde + 3-hydroxypyruvate = 2-dehydro-D-galactonate. The catalysed reaction is D-glyceraldehyde + pyruvate = 2-dehydro-3-deoxy-L-galactonate. It catalyses the reaction 2-dehydro-3-deoxy-D-gluconate = D-glyceraldehyde + pyruvate. The protein operates within aromatic compound metabolism; 4-hydroxyphenylacetate degradation; pyruvate and succinate semialdehyde from 4-hydroxyphenylacetate: step 7/7. Its function is as follows. Catalyzes the reversible retro-aldol cleavage of 4-hydroxy-2-ketoheptane-1,7-dioate (HKHD) to pyruvate and succinic semialdehyde. In vitro, can catalyze the aldolisation reaction between hydroxypyruvate (HPA) or pyruvate (PA) and D-glyceraldehyde (D-GA). The condensation of hydroxypyruvate and D-glyceraldehyde produces (3R,4S,5R)-3,4,5,6-tetrahydroxy-2-oxohexanoate as the major product, 2-dehydro-D-gluconate and 2-dehydro-D-galactonate. The condensation of pyruvate and D-glyceraldehyde produces 2-dehydro-3-deoxy-L-galactonate as the major product and 2-dehydro-3-deoxy-D-gluconate. This is 4-hydroxy-2-oxo-heptane-1,7-dioate aldolase from Escherichia coli (strain ATCC 8739 / DSM 1576 / NBRC 3972 / NCIMB 8545 / WDCM 00012 / Crooks).